Here is a 371-residue protein sequence, read N- to C-terminus: Queuine tRNA-ribosyltransferase (371 aa).

Asp92 functions as the Proton acceptor in the catalytic mechanism. Substrate contacts are provided by residues 92–96 (DSGGF), Asp147, Gln190, and Gly217. An RNA binding region spans residues 248-254 (GVGKPID). Asp267 (nucleophile) is an active-site residue. The segment at 272–276 (TRSGR) is RNA binding; important for wobble base 34 recognition.

It belongs to the queuine tRNA-ribosyltransferase family. Homodimer. Within each dimer, one monomer is responsible for RNA recognition and catalysis, while the other monomer binds to the replacement base PreQ1.

It carries out the reaction 7-aminomethyl-7-carbaguanine + guanosine(34) in tRNA = 7-aminomethyl-7-carbaguanosine(34) in tRNA + guanine. It participates in tRNA modification; tRNA-queuosine biosynthesis. Its function is as follows. Catalyzes the base-exchange of a guanine (G) residue with the queuine precursor 7-aminomethyl-7-deazaguanine (PreQ1) at position 34 (anticodon wobble position) in tRNAs with GU(N) anticodons (tRNA-Asp, -Asn, -His and -Tyr). Catalysis occurs through a double-displacement mechanism. The nucleophile active site attacks the C1' of nucleotide 34 to detach the guanine base from the RNA, forming a covalent enzyme-RNA intermediate. The proton acceptor active site deprotonates the incoming PreQ1, allowing a nucleophilic attack on the C1' of the ribose to form the product. After dissociation, two additional enzymatic reactions on the tRNA convert PreQ1 to queuine (Q), resulting in the hypermodified nucleoside queuosine (7-(((4,5-cis-dihydroxy-2-cyclopenten-1-yl)amino)methyl)-7-deazaguanosine). This Caulobacter vibrioides (strain ATCC 19089 / CIP 103742 / CB 15) (Caulobacter crescentus) protein is Queuine tRNA-ribosyltransferase.